The chain runs to 217 residues: MLO-like protein (217 aa).

3 consecutive transmembrane segments (helical) span residues 35 to 55 (FKVVVGISPILWFFAVLFLLS), 59 to 79 (GWVAYLWLPFIPLIIILVVGT), and 119 to 139 (LVLFLIHFCLFQNAFQLAFFI).

Belongs to the MLO family.

Its subcellular location is the membrane. In terms of biological role, may be involved in modulation of pathogen defense and leaf cell death. This is MLO-like protein from Linum usitatissimum (Flax).